Reading from the N-terminus, the 94-residue chain is Co-chaperonin GroES (94 aa).

The protein belongs to the GroES chaperonin family. As to quaternary structure, heptamer of 7 subunits arranged in a ring. Interacts with the chaperonin GroEL.

Its subcellular location is the cytoplasm. Its function is as follows. Together with the chaperonin GroEL, plays an essential role in assisting protein folding. The GroEL-GroES system forms a nano-cage that allows encapsulation of the non-native substrate proteins and provides a physical environment optimized to promote and accelerate protein folding. GroES binds to the apical surface of the GroEL ring, thereby capping the opening of the GroEL channel. This Streptococcus pneumoniae (strain CGSP14) protein is Co-chaperonin GroES.